A 324-amino-acid chain; its full sequence is Ribosomal RNA small subunit methyltransferase H (324 aa).

S-adenosyl-L-methionine is bound by residues 35–37, aspartate 55, phenylalanine 85, aspartate 103, and glutamine 110; that span reads GGH.

Belongs to the methyltransferase superfamily. RsmH family.

The protein resides in the cytoplasm. The enzyme catalyses cytidine(1402) in 16S rRNA + S-adenosyl-L-methionine = N(4)-methylcytidine(1402) in 16S rRNA + S-adenosyl-L-homocysteine + H(+). Its function is as follows. Specifically methylates the N4 position of cytidine in position 1402 (C1402) of 16S rRNA. This is Ribosomal RNA small subunit methyltransferase H from Solidesulfovibrio magneticus (strain ATCC 700980 / DSM 13731 / RS-1) (Desulfovibrio magneticus).